The following is a 647-amino-acid chain: Epithelial sodium channel subunit beta (647 aa).

The Cytoplasmic segment spans residues 1–57 (MIHGKMKRLKRYFTRALHRIQKGPGYTYKELLVWFCDNTNTHGPKRIIKEGPKKRVM). A helical transmembrane segment spans residues 58 to 78 (WFILTLVFAGLVFWQWGVLIL). Residues 79–552 (TYLSYGVSVS…GGQFGFWMGG (474 aa)) are Extracellular-facing. 8 disulfides stabilise this stretch: Cys-104-Cys-291, Cys-215-Cys-222, Cys-268-Cys-275, Cys-381-Cys-468, Cys-406-Cys-464, Cys-410-Cys-460, Cys-419-Cys-446, and Cys-421-Cys-435. Residues 553–573 (SVLCIIEFGEIIIDCMWITIL) traverse the membrane as a helical segment. Topologically, residues 574–647 (KFLAWSRNRR…AEPVSSDEEN (74 aa)) are cytoplasmic. Residues 586–647 (RKRPQYSDPP…AEPVSSDEEN (62 aa)) are disordered.

Belongs to the amiloride-sensitive sodium channel (TC 1.A.6) family. SCNN1B subfamily. Component of the heterotrimeric epithelial sodium channel (ENaC) composed of an alpha/SCNN1A, a beta/SCNN1B and a gamma/SCNN1G subunit.

It localises to the apical cell membrane. The protein localises to the cytoplasmic vesicle membrane. It catalyses the reaction Na(+)(in) = Na(+)(out). Originally identified and characterized by its inhibition by the diuretic drug amiloride. This is one of the three pore-forming subunits of the heterotrimeric epithelial sodium channel (ENaC), a critical regulator of sodium balance and fluid homeostasis. ENaC operates in epithelial tissues, where it mediates the electrodiffusion of sodium ions from extracellular fluid through the apical membrane of cells, with water following osmotically. In Xenopus laevis (African clawed frog), this protein is Epithelial sodium channel subunit beta (scnn1b-a).